A 1024-amino-acid chain; its full sequence is Error-prone DNA polymerase (1024 aa).

It belongs to the DNA polymerase type-C family. DnaE2 subfamily.

The protein resides in the cytoplasm. The enzyme catalyses DNA(n) + a 2'-deoxyribonucleoside 5'-triphosphate = DNA(n+1) + diphosphate. Its function is as follows. DNA polymerase involved in damage-induced mutagenesis and translesion synthesis (TLS). It is not the major replicative DNA polymerase. This chain is Error-prone DNA polymerase, found in Vibrio campbellii (strain ATCC BAA-1116).